The sequence spans 539 residues: Phosphoenolpyruvate carboxykinase (ATP) (539 aa).

Arginine 64, tyrosine 206, and lysine 212 together coordinate substrate. ATP contacts are provided by residues lysine 212, histidine 231, and 247–255 (GLSGTGKTT). Mn(2+) contacts are provided by lysine 212 and histidine 231. Residue aspartate 268 coordinates Mn(2+). ATP-binding positions include glutamate 296, arginine 332, 448-449 (RI), and threonine 454. A substrate-binding site is contributed by arginine 332.

Belongs to the phosphoenolpyruvate carboxykinase (ATP) family. As to quaternary structure, monomer. The cofactor is Mn(2+).

The protein localises to the cytoplasm. The catalysed reaction is oxaloacetate + ATP = phosphoenolpyruvate + ADP + CO2. It functions in the pathway carbohydrate biosynthesis; gluconeogenesis. Functionally, involved in the gluconeogenesis. Catalyzes the conversion of oxaloacetate (OAA) to phosphoenolpyruvate (PEP) through direct phosphoryl transfer between the nucleoside triphosphate and OAA. The sequence is that of Phosphoenolpyruvate carboxykinase (ATP) from Yersinia pseudotuberculosis serotype IB (strain PB1/+).